The chain runs to 1303 residues: MKEKYLFIPPKPKFTNKTIDKKELKKLMAWAFSNYGTGRASYLADKIKDLGFQYATKAGLSLSVEDLRVPPTKRELLKRTNEEINLTQQKYERGEITTVERFQKVIDTWNNASEELKDEVVKYFKETDPLNTIYIMAFSGARGNISQVRQLVGMRGLMADPQGQIIDLPIKSNFREGLTVTDYIISSYGARKGLVDTALRTADSGYLTRRLVDVAQDIIIREIDCDTDRGILLKDMVSNNQILIPLQNRLLGRVLFETLHSPDSANVIAHINQDLDHNTAEFIVKSGIKSVIVRSPLTCESSRSVCQFCYGWNLAHGSLVDLGEAVGIIAAQSIGEPGTQLTMRTFHTGGVFTGELAEQIRAPFDGVLRIPKSFRTRLIRTRHGEEAFVLEDSYKLDLYDSSYKKHKIEFKQGTILFLNDNEQFKKSQVIGELSTKSSMITERVTKDLNTENSGEVCFSNLYIEEKIDRQGNSITNTPKGGCLWILSGEVYNLPSYADIKIKEKQFVEEDEVLATSKVISDYGGLVRLNQSNQTSNITELQIVTSSVSLDNATIVTDDQKSTNSDPSYTLEMECGIKFHMLCSPGNKIVNSQIIAELIDTKYQTSTGGIVKYDGFEVNKKNKNKKGYEILGEGALLWIPEETHEINKDISLLLVEEGQCITAGTQIVKELYSLTEGYIQIIQENEIVKEVIVKPGKEHVRSTTSNNLNEYPKIVKPNDPDYAEYNAQGTIYIEELHYKKGNALLIRPVIEFRIDNEKIDLKTNYLTNENHHITIKPTKRVLFKDGQRVKSKYGVDLLKTYLIMSVDFDKPHLSADVEFVPAHEDDIYKLHLTVLETLQIKQDDFGESKKKSTITSLCVKQNELIKAGSTVAETHLLAHSAGFVQSINQTSQSTCKVLILTNSDEKSIDIYNQTPQVSQGDFIRSGDQIANGIIAETSGQIVEIETNKIKIRSGTPYLVSSNAILQVKNGNLVETGDTLAILVFERSKTGDIVQGLPRIEEILEARKPKEPSKLSQRPGKITLNYDSEDNKCIRILSSNGEYNEYIMSGIQKIIVSNGENILLAEPITDGAPNPHEMLGLFFNFYKERMPLYEAAKLALQKVQIYLVNEVQNVYQSQNVDISDKHIEVIVRQMTSKVKVEDGGDTTLLPGELVELQQIENINEAMTLTKGLPARYSPVLLGITKSSLNTDSFISAASFQETTRVLTEAAIEGKADWLRGLKENVIIGRLIPAGTGFNSYNDISKSFVLEKKNQMPDSYEQNQNEEQNIEDIILDDNIARNYALIENPINNFDTIEQNINQSKDI.

Residues cysteine 225, cysteine 299, cysteine 306, and cysteine 309 each contribute to the Zn(2+) site.

It belongs to the RNA polymerase beta' chain family. RpoC2 subfamily. In plastids the minimal PEP RNA polymerase catalytic core is composed of four subunits: alpha, beta, beta', and beta''. When a (nuclear-encoded) sigma factor is associated with the core the holoenzyme is formed, which can initiate transcription. The cofactor is Zn(2+).

The protein localises to the plastid. The protein resides in the chloroplast. The catalysed reaction is RNA(n) + a ribonucleoside 5'-triphosphate = RNA(n+1) + diphosphate. DNA-dependent RNA polymerase catalyzes the transcription of DNA into RNA using the four ribonucleoside triphosphates as substrates. The sequence is that of DNA-directed RNA polymerase subunit beta'' from Rhodomonas salina (Cryptomonas salina).